The following is a 590-amino-acid chain: UvrABC system protein C (590 aa).

Residues 14-91 form the GIY-YIG domain; sequence DQPGCYLMKD…IKKYDPKYNV (78 aa). Positions 196-231 constitute a UVR domain; the sequence is QQIKKELTEKMQEAAEQLEFERAKELRDQIAYIDST.

This sequence belongs to the UvrC family. Interacts with UvrB in an incision complex.

It is found in the cytoplasm. Its function is as follows. The UvrABC repair system catalyzes the recognition and processing of DNA lesions. UvrC both incises the 5' and 3' sides of the lesion. The N-terminal half is responsible for the 3' incision and the C-terminal half is responsible for the 5' incision. The polypeptide is UvrABC system protein C (Bacillus pumilus (strain SAFR-032)).